The following is a 308-amino-acid chain: Urease subunit beta (308 aa).

Residues 131-308 enclose the Urease domain; that stretch reads GGIDTHIHFI…STNPTIPFTK (178 aa). Ni(2+) is bound by residues H136, H138, K219, H248, and H274. K219 carries the N6-carboxylysine modification.

The protein belongs to the metallo-dependent hydrolases superfamily. Urease alpha subunit family. As to quaternary structure, heterohexamer of 3 UreA (alpha) and 3 UreB (beta) subunits. Ni cation serves as cofactor. In terms of processing, carboxylation allows a single lysine to coordinate two nickel ions.

It is found in the cytoplasm. The catalysed reaction is urea + 2 H2O + H(+) = hydrogencarbonate + 2 NH4(+). The protein operates within nitrogen metabolism; urea degradation; CO(2) and NH(3) from urea (urease route): step 1/1. This chain is Urease subunit beta (ureB), found in Helicobacter mustelae.